Consider the following 582-residue polypeptide: Aspartate--tRNA ligase (582 aa).

Positions 198–201 are aspartate; it reads QIFK. Residue Arg-220 coordinates L-aspartate. ATP contacts are provided by residues 220-222 and Gln-229; that span reads RDE. Residue His-445 participates in L-aspartate binding. Glu-479 is an ATP binding site. Residue Arg-486 coordinates L-aspartate. 531 to 534 serves as a coordination point for ATP; the sequence is GFDR.

It belongs to the class-II aminoacyl-tRNA synthetase family. Type 1 subfamily. As to quaternary structure, homodimer.

It is found in the cytoplasm. It carries out the reaction tRNA(Asp) + L-aspartate + ATP = L-aspartyl-tRNA(Asp) + AMP + diphosphate. Functionally, catalyzes the attachment of L-aspartate to tRNA(Asp) in a two-step reaction: L-aspartate is first activated by ATP to form Asp-AMP and then transferred to the acceptor end of tRNA(Asp). The sequence is that of Aspartate--tRNA ligase from Amoebophilus asiaticus (strain 5a2).